A 1627-amino-acid polypeptide reads, in one-letter code: Formin-like protein 5 (1627 aa).

Positions 5–194 (RKFFLKKTPD…HYITRQGSGP (190 aa)) constitute a Phosphatase tensin-type domain. Cys127 acts as the Phosphocysteine intermediate in catalysis. The 138-residue stretch at 200–337 (SRPLILDSIV…FRAEVVFSDP (138 aa)) folds into the C2 tensin-type domain. Disordered stretches follow at residues 370–413 (EAEE…LEKH), 680–787 (TKRE…YDSS), 801–1181 (KFNV…RGVV), 1241–1261 (AAVP…SLGS), and 1571–1627 (KQAE…KDVG). Composition is skewed to basic and acidic residues over residues 402 to 413 (VSREDSGSLEKH), 681 to 691 (KREESGGRRDV), 700 to 717 (IEAR…RQIP), and 726 to 742 (MPVD…EKLG). 6 stretches are compositionally biased toward pro residues: residues 824–835 (APPPPPPPPPPY), 852–870 (QPPP…PPPA), 877–886 (IPPPPPPPPL), 897–908 (VPPPPPPPPPPR), 931–965 (ISPP…PPSA), and 974–1168 (APPP…PPGG). Residues 1188 to 1588 (FGAAAARKST…RAEKEAEAEK (401 aa)) enclose the FH2 domain. Basic and acidic residues-rich tracts occupy residues 1248–1261 (DSSK…SLGS) and 1571–1590 (KQAE…EKSK). Positions 1600–1611 (KPSNPSRQVKQT) are enriched in polar residues. Basic and acidic residues predominate over residues 1612-1627 (PDTKTRAASRRGKDVG).

The protein belongs to the formin-like family. Class-II subfamily.

The protein is Formin-like protein 5 (FH5) of Oryza sativa subsp. japonica (Rice).